We begin with the raw amino-acid sequence, 309 residues long: Homoserine kinase (309 aa).

91–101 (PIGSGLGSSAC) is an ATP binding site.

This sequence belongs to the GHMP kinase family. Homoserine kinase subfamily.

The protein localises to the cytoplasm. It carries out the reaction L-homoserine + ATP = O-phospho-L-homoserine + ADP + H(+). It participates in amino-acid biosynthesis; L-threonine biosynthesis; L-threonine from L-aspartate: step 4/5. Its function is as follows. Catalyzes the ATP-dependent phosphorylation of L-homoserine to L-homoserine phosphate. In Klebsiella pneumoniae (strain 342), this protein is Homoserine kinase.